The chain runs to 239 residues: Purine nucleoside phosphorylase DeoD-type (239 aa).

His-5 is an a purine D-ribonucleoside binding site. Phosphate-binding positions include Gly-21, Arg-25, Arg-44, and 88–91 (RVGS). Residues 180–182 (EME) and 204–205 (SD) each bind a purine D-ribonucleoside. Residue Asp-205 is the Proton donor of the active site.

The protein belongs to the PNP/UDP phosphorylase family. In terms of assembly, homohexamer; trimer of homodimers.

It catalyses the reaction a purine D-ribonucleoside + phosphate = a purine nucleobase + alpha-D-ribose 1-phosphate. The enzyme catalyses a purine 2'-deoxy-D-ribonucleoside + phosphate = a purine nucleobase + 2-deoxy-alpha-D-ribose 1-phosphate. Its function is as follows. Catalyzes the reversible phosphorolytic breakdown of the N-glycosidic bond in the beta-(deoxy)ribonucleoside molecules, with the formation of the corresponding free purine bases and pentose-1-phosphate. This Myxococcus xanthus (strain DK1622) protein is Purine nucleoside phosphorylase DeoD-type.